The sequence spans 1339 residues: Astrotactin-2 (1339 aa).

The first 49 residues, 1–49 (MAAAGARLSPGPGSGLRGRPRLCFHPGPPPLLPLLLLFLLLLPPPPLLA), serve as a signal peptide directing secretion. Over 50 to 206 (GATAAASREP…IVEEQMHILH (157 aa)) the chain is Lumenal. A glycan (N-linked (GlcNAc...) asparagine) is linked at Asn168. Residues 207–227 (ISVMGGLIALLLLLLVFTVAL) traverse the membrane as a helical segment. At 228-434 (YAQRRWQKRR…KGLLKSPVNK (207 aa)) the chain is on the cytoplasmic side. 2 disordered regions span residues 296 to 316 (EEDE…EFGS) and 363 to 408 (TPIE…ADDE). A helical membrane pass occupies residues 435–455 (TALTLIAVSSCILAMVCGSQM). At 456-1339 (SCPLTVKVTL…RNTYGESKGR (884 aa)) the chain is on the lumenal side. 3 consecutive EGF-like domains span residues 510–550 (VRDL…HLCV), 651–695 (PVRD…SGCY), and 699–751 (KGID…KSCL). 9 cysteine pairs are disulfide-bonded: Cys514/Cys526, Cys522/Cys533, Cys535/Cys549, Cys655/Cys668, Cys662/Cys679, Cys681/Cys694, Cys703/Cys715, Cys711/Cys735, and Cys737/Cys750. Residues Asn770 and Asn783 are each glycosylated (N-linked (GlcNAc...) asparagine). Intrachain disulfides connect Cys825–Cys987, Cys916–Cys977, and Cys983–Cys990. The N-linked (GlcNAc...) asparagine glycan is linked to Asn1020. Disulfide bonds link Cys1036–Cys1047, Cys1049–Cys1062, Cys1136–Cys1158, Cys1190–Cys1277, and Cys1298–Cys1321. One can recognise a Fibronectin type-III domain in the interval 1065–1188 (LLQPVLRLSP…SELSTVTLRT (124 aa)).

Belongs to the astrotactin family. As to quaternary structure, interacts with ASTN1; the interaction is not calcium-dependent.

The protein resides in the membrane. It localises to the perikaryon. The protein localises to the cytoplasm. It is found in the cell cortex. Its subcellular location is the early endosome. The protein resides in the late endosome. It localises to the cytoplasmic vesicle. The protein localises to the clathrin-coated vesicle. Functionally, mediates recycling of the neuronal cell adhesion molecule ASTN1 to the anterior pole of the cell membrane in migrating neurons. Promotes ASTN1 internalization and intracellular transport of endocytosed ASTN1. Selectively binds inositol-4,5-bisphosphate, inositol-3,4,5-trisphosphate and inositol-1,3,4,5-tetrakisphosphate, suggesting it is recruited to membranes that contain lipids with a phosphoinositide headgroup. The sequence is that of Astrotactin-2 (ASTN2) from Homo sapiens (Human).